The sequence spans 538 residues: Chaperonin GroEL (538 aa).

Residues 29 to 32 (TIGP), 86 to 90 (DGTTT), Gly-413, 476 to 478 (NAA), and Asp-492 each bind ATP.

This sequence belongs to the chaperonin (HSP60) family. In terms of assembly, forms a cylinder of 14 subunits composed of two heptameric rings stacked back-to-back. Interacts with the co-chaperonin GroES.

The protein resides in the cytoplasm. The catalysed reaction is ATP + H2O + a folded polypeptide = ADP + phosphate + an unfolded polypeptide.. In terms of biological role, together with its co-chaperonin GroES, plays an essential role in assisting protein folding. The GroEL-GroES system forms a nano-cage that allows encapsulation of the non-native substrate proteins and provides a physical environment optimized to promote and accelerate protein folding. The sequence is that of Chaperonin GroEL from Staphylococcus aureus (strain USA300).